Here is a 119-residue protein sequence, read N- to C-terminus: MEFGLSWVFLVVILQGVQCEVQLVESGGGLVQPGGSLRLSCAASGFTFSDHYMDWVRQAPGKGLEWVGRTRNKANSYTTEYAASVKGRFTISRDDSKNSLYLQMNSLKTEDTAVYYCAR.

Residues 1-19 (MEFGLSWVFLVVILQGVQC) form the signal peptide. Residues 20–44 (EVQLVESGGGLVQPGGSLRLSCAAS) form a framework-1 region. In terms of domain architecture, Ig-like spans 20–119 (EVQLVESGGG…EDTAVYYCAR (100 aa)). A disulfide bridge connects residues Cys-41 and Cys-117. The complementarity-determining-1 stretch occupies residues 45–52 (GFTFSDHY). The interval 53-69 (MDWVRQAPGKGLEWVGR) is framework-2. The segment at 70–79 (TRNKANSYTT) is complementarity-determining-2. Residues 80–117 (EYAASVKGRFTISRDDSKNSLYLQMNSLKTEDTAVYYC) form a framework-3 region. The segment at 118-119 (AR) is complementarity-determining-3.

As to quaternary structure, immunoglobulins are composed of two identical heavy chains and two identical light chains; disulfide-linked.

It is found in the secreted. The protein resides in the cell membrane. Its function is as follows. V region of the variable domain of immunoglobulin heavy chains that participates in the antigen recognition. Immunoglobulins, also known as antibodies, are membrane-bound or secreted glycoproteins produced by B lymphocytes. In the recognition phase of humoral immunity, the membrane-bound immunoglobulins serve as receptors which, upon binding of a specific antigen, trigger the clonal expansion and differentiation of B lymphocytes into immunoglobulins-secreting plasma cells. Secreted immunoglobulins mediate the effector phase of humoral immunity, which results in the elimination of bound antigens. The antigen binding site is formed by the variable domain of one heavy chain, together with that of its associated light chain. Thus, each immunoglobulin has two antigen binding sites with remarkable affinity for a particular antigen. The variable domains are assembled by a process called V-(D)-J rearrangement and can then be subjected to somatic hypermutations which, after exposure to antigen and selection, allow affinity maturation for a particular antigen. This chain is Immunoglobulin heavy variable 3-72, found in Homo sapiens (Human).